A 156-amino-acid chain; its full sequence is Small ribosomal subunit protein uS7 (156 aa).

The protein belongs to the universal ribosomal protein uS7 family. Part of the 30S ribosomal subunit. Contacts proteins S9 and S11.

Its function is as follows. One of the primary rRNA binding proteins, it binds directly to 16S rRNA where it nucleates assembly of the head domain of the 30S subunit. Is located at the subunit interface close to the decoding center, probably blocks exit of the E-site tRNA. This is Small ribosomal subunit protein uS7 from Acinetobacter baylyi (strain ATCC 33305 / BD413 / ADP1).